Here is a 330-residue protein sequence, read N- to C-terminus: Phosphate acyltransferase (330 aa).

It belongs to the PlsX family. As to quaternary structure, homodimer. Probably interacts with PlsY.

It localises to the cytoplasm. The enzyme catalyses a fatty acyl-[ACP] + phosphate = an acyl phosphate + holo-[ACP]. It functions in the pathway lipid metabolism; phospholipid metabolism. Catalyzes the reversible formation of acyl-phosphate (acyl-PO(4)) from acyl-[acyl-carrier-protein] (acyl-ACP). This enzyme utilizes acyl-ACP as fatty acyl donor, but not acyl-CoA. The chain is Phosphate acyltransferase from Teredinibacter turnerae (strain ATCC 39867 / T7901).